An 80-amino-acid polypeptide reads, in one-letter code: Clavanin-A (80 aa).

A signal peptide spans 1–19 (MKTTILILLILGLGINAKS). Residues 20–29 (LEERKSEEEK) constitute a propeptide that is removed on maturation. The residue at position 52 (phenylalanine 52) is a Phenylalanine amide. The propeptide occupies 54–80 (DDQQDNGKFYGHYAEDNGKHWYDTGDQ).

It localises to the secreted. Has antimicrobial activity. This Styela clava (Sea squirt) protein is Clavanin-A.